The chain runs to 234 residues: Carbohydrate deacetylase (234 aa).

Residues histidine 60 and histidine 123 each coordinate Mg(2+).

This sequence belongs to the YdjC deacetylase family. It depends on Mg(2+) as a cofactor.

Probably catalyzes the deacetylation of acetylated carbohydrates an important step in the degradation of oligosaccharides. The chain is Carbohydrate deacetylase from Bacillus anthracis.